The sequence spans 270 residues: Putative pyruvate, phosphate dikinase regulatory protein (270 aa).

149–156 (GVSRTSKT) serves as a coordination point for ADP.

It belongs to the pyruvate, phosphate/water dikinase regulatory protein family. PDRP subfamily.

The catalysed reaction is N(tele)-phospho-L-histidyl/L-threonyl-[pyruvate, phosphate dikinase] + ADP = N(tele)-phospho-L-histidyl/O-phospho-L-threonyl-[pyruvate, phosphate dikinase] + AMP + H(+). It catalyses the reaction N(tele)-phospho-L-histidyl/O-phospho-L-threonyl-[pyruvate, phosphate dikinase] + phosphate + H(+) = N(tele)-phospho-L-histidyl/L-threonyl-[pyruvate, phosphate dikinase] + diphosphate. Its function is as follows. Bifunctional serine/threonine kinase and phosphorylase involved in the regulation of the pyruvate, phosphate dikinase (PPDK) by catalyzing its phosphorylation/dephosphorylation. The sequence is that of Putative pyruvate, phosphate dikinase regulatory protein from Thermoanaerobacter pseudethanolicus (strain ATCC 33223 / 39E) (Clostridium thermohydrosulfuricum).